We begin with the raw amino-acid sequence, 152 residues long: Acyl carrier protein, mitochondrial (152 aa).

One can recognise a Carrier domain in the interval 73 to 148; it reads KLINERVLLV…DIIKYVADKE (76 aa). Residue Ser108 is modified to O-(pantetheine 4'-phosphoryl)serine.

Belongs to the acyl carrier protein (ACP) family. In terms of assembly, complex I is composed of about 45 different subunits.

The protein resides in the mitochondrion. Functionally, carrier of the growing fatty acid chain in fatty acid biosynthesis. Accessory and non-catalytic subunit of the mitochondrial membrane respiratory chain NADH dehydrogenase (Complex I), which functions in the transfer of electrons from NADH to the respiratory chain. This chain is Acyl carrier protein, mitochondrial, found in Drosophila melanogaster (Fruit fly).